The following is a 338-amino-acid chain: Sesquiterpene synthase 2 (338 aa).

Mg(2+) is bound by residues aspartate 93, asparagine 228, serine 232, and glutamate 236. The short motif at 93-97 (DNISD) is the DDXXD motif element. The short motif at 228–236 (NDIFSYNVE) is the NSE/DTE motif element. Residues arginine 316 and tyrosine 317 each contribute to the (2E,6E)-farnesyl diphosphate site.

This sequence belongs to the terpene synthase family. Requires Mg(2+) as cofactor.

The enzyme catalyses (2E,6E)-farnesyl diphosphate = alpha-copaene + diphosphate. The catalysed reaction is (2E,6E)-farnesyl diphosphate = beta-copaene + diphosphate. It catalyses the reaction (2E,6E)-farnesyl diphosphate = alpha-muurolene + diphosphate. It carries out the reaction (2E,6E)-farnesyl diphosphate = gamma-muurolene + diphosphate. The enzyme catalyses (2E,6E)-farnesyl diphosphate = delta-cadinene + diphosphate. Its function is as follows. Terpene cyclase that catalyzes the cyclization of farnesyl diphosphate (FPP) to various sesquiterpenes, including alpha-copaene, beta-copaene, beta-elemene, alpha-muurolene, gamma-muurolene and delta-cadinene. In Postia placenta (strain ATCC 44394 / Madison 698-R) (Brown rot fungus), this protein is Sesquiterpene synthase 2.